A 466-amino-acid polypeptide reads, in one-letter code: A-type ATP synthase subunit B 2 (466 aa).

Belongs to the ATPase alpha/beta chains family. Has multiple subunits with at least A(3), B(3), C, D, E, F, H, I and proteolipid K(x).

It is found in the cell membrane. Its function is as follows. Component of the A-type ATP synthase that produces ATP from ADP in the presence of a proton gradient across the membrane. The B chain is a regulatory subunit. In Methanospirillum hungatei JF-1 (strain ATCC 27890 / DSM 864 / NBRC 100397 / JF-1), this protein is A-type ATP synthase subunit B 2.